A 542-amino-acid chain; its full sequence is Protein lin-9 homolog (542 aa).

N-acetylalanine is present on alanine 2. The segment at 2-296 is sufficient for interaction with RB1; sequence AELDQLPDES…QKQRPSRFFM (295 aa). Lysine 21 participates in a covalent cross-link: Glycyl lysine isopeptide (Lys-Gly) (interchain with G-Cter in SUMO2). A phosphoserine mark is found at serine 65 and serine 95. A phosphothreonine mark is found at threonine 96 and threonine 304. 2 positions are modified to phosphoserine: serine 309 and serine 321. A coiled-coil region spans residues 355 to 413; that stretch reads IKKEHIKKLREMNTDAEKLKSYSMPISIEFQRRYATIVLELEQLNKDLNKVLHKVQQYC.

This sequence belongs to the lin-9 family. Component of the DREAM complex (also named LINC complex) at least composed of E2F4, E2F5, LIN9, LIN37, LIN52, LIN54, MYBL1, MYBL2, RBL1, RBL2, RBBP4, TFDP1 and TFDP2. The complex exists in quiescent cells where it represses cell cycle-dependent genes. It dissociates in S phase when LIN9, LIN37, LIN52 and LIN54 form a subcomplex that binds to MYBL2. Interacts with RB1.

It localises to the nucleus. The protein localises to the nucleoplasm. Its function is as follows. Acts as a tumor suppressor. Inhibits DNA synthesis. Its ability to inhibit oncogenic transformation is mediated through its association with RB1. Plays a role in the expression of genes required for the G1/S transition. In Macaca fascicularis (Crab-eating macaque), this protein is Protein lin-9 homolog (LIN9).